Here is a 390-residue protein sequence, read N- to C-terminus: GTPase Obg (390 aa).

An Obg domain is found at 1-159 (MKFVDEAAIL…RELMLELLLL (159 aa)). The OBG-type G domain occupies 160 to 333 (ADVGMLGLPN…LCWDVMSFLN (174 aa)). GTP is bound by residues 166–173 (GLPNAGKS), 191–195 (FTTLI), 213–216 (DIPG), 283–286 (NKID), and 314–316 (SAA). Residues Ser-173 and Thr-193 each contribute to the Mg(2+) site. Positions 364 to 384 (VEAEAEDDWDDDWDEEDDDGV) are enriched in acidic residues. The interval 364–390 (VEAEAEDDWDDDWDEEDDDGVEIIYER) is disordered.

It belongs to the TRAFAC class OBG-HflX-like GTPase superfamily. OBG GTPase family. Monomer. The cofactor is Mg(2+).

Its subcellular location is the cytoplasm. An essential GTPase which binds GTP, GDP and possibly (p)ppGpp with moderate affinity, with high nucleotide exchange rates and a fairly low GTP hydrolysis rate. Plays a role in control of the cell cycle, stress response, ribosome biogenesis and in those bacteria that undergo differentiation, in morphogenesis control. The polypeptide is GTPase Obg (Yersinia pestis).